The chain runs to 482 residues: Exodeoxyribonuclease 7 large subunit (482 aa).

A disordered region spans residues 457-482 (TLDTGGAPAKPASKPKQKPPEQGSLF).

Belongs to the XseA family. In terms of assembly, heterooligomer composed of large and small subunits.

The protein resides in the cytoplasm. The enzyme catalyses Exonucleolytic cleavage in either 5'- to 3'- or 3'- to 5'-direction to yield nucleoside 5'-phosphates.. In terms of biological role, bidirectionally degrades single-stranded DNA into large acid-insoluble oligonucleotides, which are then degraded further into small acid-soluble oligonucleotides. The sequence is that of Exodeoxyribonuclease 7 large subunit from Ruegeria pomeroyi (strain ATCC 700808 / DSM 15171 / DSS-3) (Silicibacter pomeroyi).